The chain runs to 352 residues: Isoflavone-7-O-methyltransferase 9 (352 aa).

118 to 127 is a binding site for substrate; it reads VLDPTLSGSY. S-adenosyl-L-methionine-binding residues include Gly-196, Asp-219, Asp-239, Met-240, and Lys-253. His-257 acts as the Proton acceptor in catalysis.

The protein belongs to the class I-like SAM-binding methyltransferase superfamily. Cation-independent O-methyltransferase family. COMT subfamily. In terms of assembly, homodimer.

The catalysed reaction is a 7-hydroxyisoflavone + S-adenosyl-L-methionine = a 7-methoxyisoflavone + S-adenosyl-L-homocysteine + H(+). Its pathway is phytoalexin biosynthesis; medicarpin biosynthesis. Transfers a methyl group to 7-hydroxyls of the isoflavones daidzein, genistein and 6,7,4'-trihydroxyisoflavone. Can also methylate (+)6a-hydroxymaackiain with lower efficiency. The sequence is that of Isoflavone-7-O-methyltransferase 9 from Medicago sativa (Alfalfa).